The chain runs to 346 residues: Biotin synthase (346 aa).

Residues 38–256 enclose the Radical SAM core domain; that stretch reads QQVQVSTLLS…IAVARIMMPT (219 aa). [4Fe-4S] cluster contacts are provided by Cys-53, Cys-57, and Cys-60. Positions 97, 128, 188, and 260 each coordinate [2Fe-2S] cluster.

Belongs to the radical SAM superfamily. Biotin synthase family. As to quaternary structure, homodimer. The cofactor is [4Fe-4S] cluster. It depends on [2Fe-2S] cluster as a cofactor.

It carries out the reaction (4R,5S)-dethiobiotin + (sulfur carrier)-SH + 2 reduced [2Fe-2S]-[ferredoxin] + 2 S-adenosyl-L-methionine = (sulfur carrier)-H + biotin + 2 5'-deoxyadenosine + 2 L-methionine + 2 oxidized [2Fe-2S]-[ferredoxin]. It functions in the pathway cofactor biosynthesis; biotin biosynthesis; biotin from 7,8-diaminononanoate: step 2/2. In terms of biological role, catalyzes the conversion of dethiobiotin (DTB) to biotin by the insertion of a sulfur atom into dethiobiotin via a radical-based mechanism. The chain is Biotin synthase from Citrobacter koseri (strain ATCC BAA-895 / CDC 4225-83 / SGSC4696).